The following is a 316-amino-acid chain: Ribosomal RNA small subunit methyltransferase H (316 aa).

Residues 35-37, Asp55, Phe84, Asp105, and Gln112 contribute to the S-adenosyl-L-methionine site; that span reads SGH.

Belongs to the methyltransferase superfamily. RsmH family.

Its subcellular location is the cytoplasm. It carries out the reaction cytidine(1402) in 16S rRNA + S-adenosyl-L-methionine = N(4)-methylcytidine(1402) in 16S rRNA + S-adenosyl-L-homocysteine + H(+). Functionally, specifically methylates the N4 position of cytidine in position 1402 (C1402) of 16S rRNA. The chain is Ribosomal RNA small subunit methyltransferase H from Streptococcus equi subsp. equi (strain 4047).